A 293-amino-acid polypeptide reads, in one-letter code: Shikimate dehydrogenase (NADP(+)) (293 aa).

Shikimate-binding positions include 26–28 (SKS) and Thr73. Lys77 functions as the Proton acceptor in the catalytic mechanism. Asp89 serves as a coordination point for NADP(+). Residues Asn98 and Asp113 each contribute to the shikimate site. NADP(+) is bound by residues 137–141 (GAGGA), 161–166 (NRTKQR), and Ile231. Tyr233 serves as a coordination point for shikimate. NADP(+) is bound at residue Gly254.

The protein belongs to the shikimate dehydrogenase family. Homodimer.

The enzyme catalyses shikimate + NADP(+) = 3-dehydroshikimate + NADPH + H(+). It participates in metabolic intermediate biosynthesis; chorismate biosynthesis; chorismate from D-erythrose 4-phosphate and phosphoenolpyruvate: step 4/7. Its function is as follows. Involved in the biosynthesis of the chorismate, which leads to the biosynthesis of aromatic amino acids. Catalyzes the reversible NADPH linked reduction of 3-dehydroshikimate (DHSA) to yield shikimate (SA). The protein is Shikimate dehydrogenase (NADP(+)) of Bartonella henselae (strain ATCC 49882 / DSM 28221 / CCUG 30454 / Houston 1) (Rochalimaea henselae).